The primary structure comprises 189 residues: Sec-independent protein translocase protein TatB (189 aa).

Residues M1–G21 form a helical membrane-spanning segment. The tract at residues T152–S189 is disordered. Residues Q153–S189 show a composition bias toward polar residues.

The protein belongs to the TatB family. In terms of assembly, the Tat system comprises two distinct complexes: a TatABC complex, containing multiple copies of TatA, TatB and TatC subunits, and a separate TatA complex, containing only TatA subunits. Substrates initially bind to the TatABC complex, which probably triggers association of the separate TatA complex to form the active translocon.

It localises to the cell inner membrane. In terms of biological role, part of the twin-arginine translocation (Tat) system that transports large folded proteins containing a characteristic twin-arginine motif in their signal peptide across membranes. Together with TatC, TatB is part of a receptor directly interacting with Tat signal peptides. TatB may form an oligomeric binding site that transiently accommodates folded Tat precursor proteins before their translocation. This chain is Sec-independent protein translocase protein TatB, found in Helicobacter hepaticus (strain ATCC 51449 / 3B1).